Consider the following 232-residue polypeptide: Aspartate/glutamate leucyltransferase (232 aa).

It belongs to the R-transferase family. Bpt subfamily.

The protein localises to the cytoplasm. The enzyme catalyses N-terminal L-glutamyl-[protein] + L-leucyl-tRNA(Leu) = N-terminal L-leucyl-L-glutamyl-[protein] + tRNA(Leu) + H(+). It catalyses the reaction N-terminal L-aspartyl-[protein] + L-leucyl-tRNA(Leu) = N-terminal L-leucyl-L-aspartyl-[protein] + tRNA(Leu) + H(+). In terms of biological role, functions in the N-end rule pathway of protein degradation where it conjugates Leu from its aminoacyl-tRNA to the N-termini of proteins containing an N-terminal aspartate or glutamate. The chain is Aspartate/glutamate leucyltransferase from Vibrio vulnificus (strain CMCP6).